The primary structure comprises 121 residues: Holo-[acyl-carrier-protein] synthase (121 aa).

Mg(2+)-binding residues include aspartate 8 and glutamate 58.

The protein belongs to the P-Pant transferase superfamily. AcpS family. As to quaternary structure, homotrimer. It depends on Mg(2+) as a cofactor.

Its subcellular location is the cytoplasm. The enzyme catalyses apo-[ACP] + CoA = holo-[ACP] + adenosine 3',5'-bisphosphate + H(+). In terms of biological role, transfers the 4'-phosphopantetheine moiety from coenzyme A to a Ser of fatty acid acyl-carrier-protein ACP. Also modifies the D-alanyl carrier protein but fails to recognize PCP and AcpK, an acyl carrier protein of secondary metabolism. The chain is Holo-[acyl-carrier-protein] synthase from Bacillus subtilis (strain 168).